Here is a 964-residue protein sequence, read N- to C-terminus: Fanconi-associated nuclease 1 homolog (964 aa).

The tract at residues 31–56 (SRSLQDDAADAEREAAAGGSSSGGGD) is disordered. Residues 63–92 (WVACPVCGESIRGTDYCVNTHLDICLTRGT) form a UBZ4-type zinc finger. Residues Cys-66, Cys-69, His-83, and Cys-87 each contribute to the Zn(2+) site. Glu-786, Asp-907, Glu-926, and Val-927 together coordinate Mn(2+). One can recognise a VRR-NUC domain in the interval 844-958 (GIAEEILISS…GFDVEVCKVS (115 aa)).

Belongs to the FAN1 family. Mn(2+) serves as cofactor. Requires Mg(2+) as cofactor.

The catalysed reaction is Hydrolytically removes 5'-nucleotides successively from the 3'-hydroxy termini of 3'-hydroxy-terminated oligonucleotides.. Its function is as follows. Nuclease required for the repair of DNA interstrand cross-links (ICL). Acts as a 5'-3' exonuclease that anchors at a cut end of DNA and cleaves DNA successively at every third nucleotide, allowing to excise an ICL from one strand through flanking incisions. The polypeptide is Fanconi-associated nuclease 1 homolog (Oryza sativa subsp. japonica (Rice)).